We begin with the raw amino-acid sequence, 374 residues long: ORC1-type DNA replication protein 6 (374 aa).

ATP contacts are provided by residues 66–70, Y209, and R221; that span reads TGKTT.

This sequence belongs to the CDC6/cdc18 family.

Functionally, involved in regulation of DNA replication. This chain is ORC1-type DNA replication protein 6 (orc6), found in Halobacterium salinarum (strain ATCC 700922 / JCM 11081 / NRC-1) (Halobacterium halobium).